The chain runs to 273 residues: Transmembrane protein 202 (273 aa).

The next 4 membrane-spanning stretches (helical) occupy residues 53–75, 121–141, 155–175, and 189–209; these read HIYI…IAMS, FFLI…SSWI, VSML…LFVA, and LLWT…AGII. Residues 242-273 form a disordered region; the sequence is TTVSPAKDEGPRSEMESLSVREKNLPKSGLWW. Positions 247–266 are enriched in basic and acidic residues; sequence AKDEGPRSEMESLSVREKNL.

It is found in the membrane. The sequence is that of Transmembrane protein 202 (TMEM202) from Homo sapiens (Human).